Here is a 174-residue protein sequence, read N- to C-terminus: Ribulose bisphosphate carboxylase small subunit, chloroplastic 1 (174 aa).

Residues 1–45 (MAPAVMASSATTVAPFQGLKSTAGLPVSRRSRGSLGSVSNGGRIR) constitute a chloroplast transit peptide.

The protein belongs to the RuBisCO small chain family. In terms of assembly, heterohexadecamer of 8 large and 8 small subunits.

It is found in the plastid. The protein localises to the chloroplast. Its function is as follows. RuBisCO catalyzes two reactions: the carboxylation of D-ribulose 1,5-bisphosphate, the primary event in carbon dioxide fixation, as well as the oxidative fragmentation of the pentose substrate. Both reactions occur simultaneously and in competition at the same active site. Although the small subunit is not catalytic it is essential for maximal activity. This chain is Ribulose bisphosphate carboxylase small subunit, chloroplastic 1, found in Triticum aestivum (Wheat).